The primary structure comprises 323 residues: UDP-N-acetylenolpyruvoylglucosamine reductase (323 aa).

An FAD-binding PCMH-type domain is found at Lys-52–Gly-217. Arg-197 is a catalytic residue. A disordered region spans residues Glu-234–Gly-253. Residues Gln-235–Lys-249 show a composition bias toward polar residues. Ser-246 (proton donor) is an active-site residue. Residue Glu-316 is part of the active site.

Belongs to the MurB family. FAD is required as a cofactor.

The protein localises to the cytoplasm. It carries out the reaction UDP-N-acetyl-alpha-D-muramate + NADP(+) = UDP-N-acetyl-3-O-(1-carboxyvinyl)-alpha-D-glucosamine + NADPH + H(+). The protein operates within cell wall biogenesis; peptidoglycan biosynthesis. Its function is as follows. Cell wall formation. The protein is UDP-N-acetylenolpyruvoylglucosamine reductase of Erythrobacter litoralis (strain HTCC2594).